Here is a 393-residue protein sequence, read N- to C-terminus: MARQKFERNKPHVNIGTIGHVDHGKTTTTAAITMTLAKAGGAEVQNYEDIDKAPEEKERGITINTSHVEYETENRHYAHVDCPGHADYVKNMITGAAQMDGAILVVSAADGPMPQTREHILLASRVGVNHIVVFLNKADQVDDPELLELVEMEVRELLSEYGFDGDECPVVVGSALKAIEEGDDQCILDLMKAVDEYIPTPERATDQPFLMPVEDVFTITGRGTVATGRVERGVLHVGDEVQIVGMKEEIGKTTITGVEMFRKMLDEAMAGDNIGALLRGVQRDEIERGQVLAKPGSVTPHKKFVGQVYVLKKEEGGRHTPFFNGYRPQFYFRTTDVTGSIALPEGVEMVMPGDHIDMNVELITPVAMENNLRFAIREGGRTVGSGVVTSIVE.

In terms of domain architecture, tr-type G spans 10–202; sequence KPHVNIGTIG…AVDEYIPTPE (193 aa). The segment at 19-26 is G1; it reads GHVDHGKT. 19–26 contributes to the GTP binding site; that stretch reads GHVDHGKT. Residue Thr26 participates in Mg(2+) binding. The tract at residues 60-64 is G2; it reads GITIN. Residues 81 to 84 are G3; sequence DCPG. Residues 81–85 and 136–139 each bind GTP; these read DCPGH and NKAD. A G4 region spans residues 136–139; it reads NKAD. The G5 stretch occupies residues 174–176; sequence SAL.

It belongs to the TRAFAC class translation factor GTPase superfamily. Classic translation factor GTPase family. EF-Tu/EF-1A subfamily. Monomer.

The protein localises to the cytoplasm. It catalyses the reaction GTP + H2O = GDP + phosphate + H(+). Its function is as follows. GTP hydrolase that promotes the GTP-dependent binding of aminoacyl-tRNA to the A-site of ribosomes during protein biosynthesis. The protein is Elongation factor Tu of Clostridium novyi (strain NT).